The sequence spans 314 residues: 2-dehydro-3-deoxygluconokinase (314 aa).

Substrate contacts are provided by residues 28 to 32 (GDTLN), tyrosine 88, 102 to 104 (YWR), and arginine 170. Residues 168-170 (NYR), 228-233 (KCGKNG), and 260-263 (SAGD) contribute to the ATP site. A substrate-binding site is contributed by aspartate 263. The Proton acceptor role is filled by aspartate 263.

It belongs to the carbohydrate kinase PfkB family.

It catalyses the reaction 2-dehydro-3-deoxy-D-gluconate + ATP = 2-dehydro-3-deoxy-6-phospho-D-gluconate + ADP + H(+). The protein operates within carbohydrate acid metabolism; 2-dehydro-3-deoxy-D-gluconate degradation; D-glyceraldehyde 3-phosphate and pyruvate from 2-dehydro-3-deoxy-D-gluconate: step 1/2. In terms of biological role, catalyzes the phosphorylation of 2-keto-3-deoxygluconate (KDG) to produce 2-keto-3-deoxy-6-phosphogluconate (KDPG). This chain is 2-dehydro-3-deoxygluconokinase (kdgK), found in Haemophilus influenzae (strain ATCC 51907 / DSM 11121 / KW20 / Rd).